The sequence spans 305 residues: Ribosomal RNA small subunit methyltransferase H (305 aa).

Residues 47–49, D66, F93, D108, and Q115 contribute to the S-adenosyl-L-methionine site; that span reads GGH.

Belongs to the methyltransferase superfamily. RsmH family.

Its subcellular location is the cytoplasm. It carries out the reaction cytidine(1402) in 16S rRNA + S-adenosyl-L-methionine = N(4)-methylcytidine(1402) in 16S rRNA + S-adenosyl-L-homocysteine + H(+). Functionally, specifically methylates the N4 position of cytidine in position 1402 (C1402) of 16S rRNA. This chain is Ribosomal RNA small subunit methyltransferase H, found in Prochlorococcus marinus (strain MIT 9211).